Here is a 406-residue protein sequence, read N- to C-terminus: ATP phosphoribosyltransferase regulatory subunit (406 aa).

Belongs to the class-II aminoacyl-tRNA synthetase family. HisZ subfamily. Heteromultimer composed of HisG and HisZ subunits.

Its subcellular location is the cytoplasm. It participates in amino-acid biosynthesis; L-histidine biosynthesis; L-histidine from 5-phospho-alpha-D-ribose 1-diphosphate: step 1/9. Its function is as follows. Required for the first step of histidine biosynthesis. May allow the feedback regulation of ATP phosphoribosyltransferase activity by histidine. This chain is ATP phosphoribosyltransferase regulatory subunit, found in Methylococcus capsulatus (strain ATCC 33009 / NCIMB 11132 / Bath).